Consider the following 510-residue polypeptide: Ferredoxin--nitrite reductase (510 aa).

4 residues coordinate [4Fe-4S] cluster: C396, C402, C437, and C441. C441 lines the siroheme pocket.

The protein belongs to the nitrite and sulfite reductase 4Fe-4S domain family.

It carries out the reaction 6 oxidized [2Fe-2S]-[ferredoxin] + NH4(+) + 2 H2O = nitrite + 6 reduced [2Fe-2S]-[ferredoxin] + 8 H(+). The polypeptide is Ferredoxin--nitrite reductase (nirA) (Leptolyngbya laminosa (Phormidium laminosum)).